The following is a 273-amino-acid chain: Protein FAM210A (273 aa).

The interval 95–116 (VLSSSSTSQETPSEKKEEPDPL) is disordered. Basic and acidic residues predominate over residues 106 to 116 (PSEKKEEPDPL). Residues 118–230 (DKSISLYQRF…GYMSTPPPVK (113 aa)) enclose the DUF1279 domain. A helical transmembrane segment spans residues 138–158 (LIPVHLITSGIWFGTFYYASI). A coiled-coil region spans residues 233–272 (LQGRMEETKELISEKMEETKDRLTEKLQETKEKVSFKKKV). A disordered region spans residues 247–273 (KMEETKDRLTEKLQETKEKVSFKKKVE).

This sequence belongs to the FAM210 family. Interacts with ATAD3A.

It is found in the membrane. It localises to the mitochondrion. The protein localises to the cytoplasm. May play a role in the structure and strength of both muscle and bone. The polypeptide is Protein FAM210A (Fam210a) (Rattus norvegicus (Rat)).